A 43-amino-acid polypeptide reads, in one-letter code: uncharacterized protein (43 aa).

Residues 1–37 (MIIKNNNNNNNNNNNNNNNNNNNNNNNNNNNNNNNNN) are compositionally biased toward low complexity. A disordered region spans residues 1–43 (MIIKNNNNNNNNNNNNNNNNNNNNNNNNNNNNNNNNNIEIIIK).

This is an uncharacterized protein from Dictyostelium discoideum (Social amoeba).